The sequence spans 444 residues: Phosphoglucosamine mutase (444 aa).

Serine 102 (phosphoserine intermediate) is an active-site residue. Mg(2+) contacts are provided by serine 102, aspartate 241, aspartate 243, and aspartate 245. Serine 102 is subject to Phosphoserine.

The protein belongs to the phosphohexose mutase family. Mg(2+) is required as a cofactor. In terms of processing, activated by phosphorylation.

It carries out the reaction alpha-D-glucosamine 1-phosphate = D-glucosamine 6-phosphate. Its function is as follows. Catalyzes the conversion of glucosamine-6-phosphate to glucosamine-1-phosphate. The sequence is that of Phosphoglucosamine mutase from Haemophilus ducreyi (strain 35000HP / ATCC 700724).